The sequence spans 402 residues: Serine/threonine-protein kinase US3 homolog (402 aa).

2 disordered regions span residues 1-21 (MSST…KVHD) and 46-88 (FPDS…SPET). Residues 102–386 (YNIVSSLPPG…AQDILMLPLF (285 aa)) form the Protein kinase domain. ATP is bound by residues 110–118 (PGSEGYIYV) and lysine 127. The active-site Proton acceptor is aspartate 218.

The protein belongs to the protein kinase superfamily. Ser/Thr protein kinase family. Post-translationally, phosphorylated by UL13 homolog; this phosphorylation regulates subsequent phosphorylation of UL31 and UL34 homologs by US3. Autophosphorylated.

The protein localises to the host cytoplasm. The protein resides in the host nucleus. The enzyme catalyses L-seryl-[protein] + ATP = O-phospho-L-seryl-[protein] + ADP + H(+). It catalyses the reaction L-threonyl-[protein] + ATP = O-phospho-L-threonyl-[protein] + ADP + H(+). In terms of biological role, multifunctional serine/threonine kinase that plays a role in several processes including egress of virus particles from the nucleus, modulation of the actin cytoskeleton and inhibition of apoptosis. Phosphorylates UL31 and UL34 homologs, two critical regulators of capsid budding from nucleus to endoplasmic reticulum, thereby facilitating virion egress. Modulates and redistributes host components of the nuclear envelope, including LMNA, emerin/EMD and the nuclear matrix protein MATR3. Phosphorylates envelope glycoprotein B (gB), probably to direct it to the cell surface. Promotes virus intracellular spread by restructuring host cell cytoskeleton. Blocks host apoptosis to extend cell survival and allow efficient viral replication. Promotes viral gene expression by phosphorylating host HDAC2 to reduce viral genome silencing. The sequence is that of Serine/threonine-protein kinase US3 homolog (US1206) from Gallid herpesvirus 2 (strain GA) (GaHV-2).